The chain runs to 842 residues: Glycogen phosphorylase, muscle form (842 aa).

At Ser2 the chain carries N-acetylserine. Ser15 carries the phosphoserine; by PHK; in form phosphorylase A modification. AMP contacts are provided by Asp43 and Tyr76. A phosphotyrosine mark is found at Tyr204 and Tyr227. Residue 310 to 319 (RRFKSSKFGC) participates in AMP binding. A Phosphoserine modification is found at Ser430. Tyr473 carries the post-translational modification Phosphotyrosine. Phosphoserine is present on Ser514. N6-(pyridoxal phosphate)lysine is present on Lys681. A phosphoserine mark is found at Ser747 and Ser748.

Belongs to the glycogen phosphorylase family. As to quaternary structure, homodimer. Homotetramer; to form the enzymatically active phosphorylase A. It depends on pyridoxal 5'-phosphate as a cofactor. Phosphorylation of Ser-15 converts phosphorylase B (unphosphorylated) to phosphorylase A.

It carries out the reaction [(1-&gt;4)-alpha-D-glucosyl](n) + phosphate = [(1-&gt;4)-alpha-D-glucosyl](n-1) + alpha-D-glucose 1-phosphate. Its activity is regulated as follows. Allosterically regulated through the non-covalent binding of metabolites, being activated by AMP and inhibited by ATP, ADP, and glucose-6-phosphate. The activity is also controlled by post-translational modifications including phosphorylation. Functionally, allosteric enzyme that catalyzes the rate-limiting step in glycogen catabolism, the phosphorolytic cleavage of glycogen to produce glucose-1-phosphate, and plays a central role in maintaining cellular and organismal glucose homeostasis. The sequence is that of Glycogen phosphorylase, muscle form from Macaca fascicularis (Crab-eating macaque).